The following is a 685-amino-acid chain: Potassium-transporting ATPase ATP-binding subunit (685 aa).

Transmembrane regions (helical) follow at residues 36-56 (MFVVEVGFFVTILLTIFPSIF), 68-88 (LIVTIILFITVLFANFAESVA), 218-238 (IALNTILVSLTLIFLIVLVAL), and 255-275 (IALLVCLIPTTIGGLLSAIGI). Residue Asp306 is the 4-aspartylphosphate intermediate of the active site. Residues Asp343, Glu347, 375–382 (FTAQTRMS), and Lys394 each bind ATP. Mg(2+) contacts are provided by Asp517 and Asp521. Transmembrane regions (helical) follow at residues 587 to 607 (FAIIPAIFTIAIPKMQLMNIM), 615 to 635 (AILSALIFNAIIIPALIPIAM), and 654 to 674 (IVFGFGGIIVPFVGIKIIDMI).

The protein belongs to the cation transport ATPase (P-type) (TC 3.A.3) family. Type IA subfamily. The system is composed of three essential subunits: KdpA, KdpB and KdpC.

The protein localises to the cell membrane. The enzyme catalyses K(+)(out) + ATP + H2O = K(+)(in) + ADP + phosphate + H(+). In terms of biological role, part of the high-affinity ATP-driven potassium transport (or Kdp) system, which catalyzes the hydrolysis of ATP coupled with the electrogenic transport of potassium into the cytoplasm. This subunit is responsible for energy coupling to the transport system and for the release of the potassium ions to the cytoplasm. The sequence is that of Potassium-transporting ATPase ATP-binding subunit from Clostridium acetobutylicum (strain ATCC 824 / DSM 792 / JCM 1419 / IAM 19013 / LMG 5710 / NBRC 13948 / NRRL B-527 / VKM B-1787 / 2291 / W).